The chain runs to 465 residues: Hydroxyacid-oxoacid transhydrogenase, mitochondrial (465 aa).

Belongs to the iron-containing alcohol dehydrogenase family. Hydroxyacid-oxoacid transhydrogenase subfamily.

The protein resides in the mitochondrion. It catalyses the reaction (S)-3-hydroxybutanoate + 2-oxoglutarate = (R)-2-hydroxyglutarate + acetoacetate. The catalysed reaction is 4-hydroxybutanoate + 2-oxoglutarate = (R)-2-hydroxyglutarate + succinate semialdehyde. Catalyzes the cofactor-independent reversible oxidation of gamma-hydroxybutyrate (GHB) to succinic semialdehyde (SSA) coupled to reduction of 2-ketoglutarate (2-KG) to D-2-hydroxyglutarate (D-2-HG). L-3-hydroxybutyrate (L-3-OHB) is also a substrate for HOT when using 2-KG as hydrogen acceptor, resulting in the formation of D-2-HG. The sequence is that of Hydroxyacid-oxoacid transhydrogenase, mitochondrial from Caenorhabditis elegans.